Consider the following 267-residue polypeptide: Putative F-box protein At5g38810 (267 aa).

Residues Arg4–Lys53 form the F-box domain.

The polypeptide is Putative F-box protein At5g38810 (Arabidopsis thaliana (Mouse-ear cress)).